We begin with the raw amino-acid sequence, 219 residues long: Thymidylate kinase (219 aa).

Residue 7 to 14 (GIDGCGKT) participates in ATP binding.

It belongs to the thymidylate kinase family.

The enzyme catalyses dTMP + ATP = dTDP + ADP. Functionally, phosphorylation of dTMP to form dTDP in both de novo and salvage pathways of dTTP synthesis. The chain is Thymidylate kinase from Anaplasma phagocytophilum (strain HZ).